Reading from the N-terminus, the 1071-residue chain is Carbamoyl phosphate synthase pyrimidine-specific large chain (1071 aa).

Positions 1–401 are carboxyphosphate synthetic domain; that stretch reads MPKRVDINKI…SLLKAVRSLE (401 aa). The ATP site is built by Arg-129, Arg-169, Gly-175, Gly-176, Lys-208, Ile-210, Glu-215, Gly-241, Ile-242, His-243, Gln-284, and Glu-298. One can recognise an ATP-grasp 1 domain in the interval 133–327; that stretch reads RTLMNELNEP…IAKLAAKIAV (195 aa). Positions 284, 298, and 300 each coordinate Mg(2+). Mn(2+) is bound by residues Gln-284, Glu-298, and Asn-300. Positions 402–546 are oligomerization domain; the sequence is ADVYHLELKD…YSTYEEENES (145 aa). Residues 547–929 are carbamoyl phosphate synthetic domain; sequence VVTDKKSVMV…ALYKALIASG (383 aa). The region spanning 671 to 861 is the ATP-grasp 2 domain; the sequence is EQALGELGVP…MANLATKIIL (191 aa). Positions 707, 746, 748, 752, 777, 778, 779, 780, 820, and 832 each coordinate ATP. Residues Gln-820, Glu-832, and Asn-834 each coordinate Mg(2+). Mn(2+)-binding residues include Gln-820, Glu-832, and Asn-834. Residues 930 to 1071 form the MGS-like domain; it reads IQIPNYGSVL…NTNQEAAVTI (142 aa). An allosteric domain region spans residues 930–1071; the sequence is IQIPNYGSVL…NTNQEAAVTI (142 aa).

It belongs to the CarB family. Composed of two chains; the small (or glutamine) chain promotes the hydrolysis of glutamine to ammonia, which is used by the large (or ammonia) chain to synthesize carbamoyl phosphate. Tetramer of heterodimers (alpha,beta)4. Interacts with BrxC. The cofactor is Mg(2+). It depends on Mn(2+) as a cofactor.

It catalyses the reaction hydrogencarbonate + L-glutamine + 2 ATP + H2O = carbamoyl phosphate + L-glutamate + 2 ADP + phosphate + 2 H(+). The enzyme catalyses hydrogencarbonate + NH4(+) + 2 ATP = carbamoyl phosphate + 2 ADP + phosphate + 2 H(+). It participates in amino-acid biosynthesis; L-arginine biosynthesis; carbamoyl phosphate from bicarbonate: step 1/1. The protein operates within pyrimidine metabolism; UMP biosynthesis via de novo pathway; (S)-dihydroorotate from bicarbonate: step 1/3. Small subunit of the glutamine-dependent carbamoyl phosphate synthetase (CPSase). CPSase catalyzes the formation of carbamoyl phosphate from the ammonia moiety of glutamine, carbonate, and phosphate donated by ATP, constituting the first step of the biosynthetic pathway leading to pyrimidine nucleotides. The large subunit (synthetase) binds the substrates ammonia (free or transferred from glutamine from the small subunit), hydrogencarbonate and ATP and carries out an ATP-coupled ligase reaction, activating hydrogencarbonate by forming carboxy phosphate which reacts with ammonia to form carbamoyl phosphate. This chain is Carbamoyl phosphate synthase pyrimidine-specific large chain (pyrAB), found in Bacillus subtilis (strain 168).